The chain runs to 280 residues: MLIINDNNLSGLSLQRVNGTGELSVQFKDGRSRISRLYQEGAAKIRMPQAVTGPLEAILINTSGGLTGGDRLKWDVALDDGASAVITTQACERIYRSGGGEARIATRLKAAKGTRLAWLPQETILFNRSILSRRLDVELEEGAQMLVVEATVFGRLAMGERVVAARFADRWRVRLGGRVIHAEEFRLGPDVGAELQATAVAGGACAMATVLMVCEQAGRHLETARAIIGEEGGCSLWRVGKASKLVVRLYAPDSYALRRRLCPLVALLNGKAGLPKVWTI.

Belongs to the UreD family. In terms of assembly, ureD, UreF and UreG form a complex that acts as a GTP-hydrolysis-dependent molecular chaperone, activating the urease apoprotein by helping to assemble the nickel containing metallocenter of UreC. The UreE protein probably delivers the nickel.

The protein localises to the cytoplasm. Its function is as follows. Required for maturation of urease via the functional incorporation of the urease nickel metallocenter. This is Urease accessory protein UreD 1 from Brucella melitensis biotype 1 (strain ATCC 23456 / CCUG 17765 / NCTC 10094 / 16M).